The following is a 187-amino-acid chain: UPF0232 protein MUL_0004 (187 aa).

Residues 1 to 12 show a composition bias toward gly residues; the sequence is MNGDGEQPGPGD. Disordered stretches follow at residues 1-77 and 166-187; these read MNGD…QPLG and ASPS…DTYG. A compositionally biased stretch (basic and acidic residues) spans 14–30; that stretch reads AARDELPSMDLVRRTLA. Over residues 31–55 the composition is skewed to low complexity; it reads EARAAARARGQDPGRGFAAGPAPRR.

The protein belongs to the UPF0232 family.

This is UPF0232 protein MUL_0004 from Mycobacterium ulcerans (strain Agy99).